Consider the following 372-residue polypeptide: Probable L-tyrosine/L-aspartate decarboxylase (372 aa).

K215 is subject to N6-(pyridoxal phosphate)lysine.

It belongs to the group II decarboxylase family. MfnA subfamily. Pyridoxal 5'-phosphate serves as cofactor.

It carries out the reaction L-tyrosine + H(+) = tyramine + CO2. The catalysed reaction is L-aspartate + H(+) = beta-alanine + CO2. It functions in the pathway cofactor biosynthesis; methanofuran biosynthesis. It participates in cofactor biosynthesis; coenzyme A biosynthesis. Catalyzes the decarboxylation of L-tyrosine to produce tyramine for methanofuran biosynthesis. Can also catalyze the decarboxylation of L-aspartate to produce beta-alanine for coenzyme A (CoA) biosynthesis. The protein is Probable L-tyrosine/L-aspartate decarboxylase of Methanopyrus kandleri (strain AV19 / DSM 6324 / JCM 9639 / NBRC 100938).